A 276-amino-acid polypeptide reads, in one-letter code: Bis(5'-nucleosyl)-tetraphosphatase, symmetrical (276 aa).

The protein belongs to the Ap4A hydrolase family.

The catalysed reaction is P(1),P(4)-bis(5'-adenosyl) tetraphosphate + H2O = 2 ADP + 2 H(+). Functionally, hydrolyzes diadenosine 5',5'''-P1,P4-tetraphosphate to yield ADP. This chain is Bis(5'-nucleosyl)-tetraphosphatase, symmetrical, found in Legionella pneumophila (strain Corby).